Here is a 471-residue protein sequence, read N- to C-terminus: Glutamyl-tRNA(Gln) amidotransferase subunit A, mitochondrial (471 aa).

Catalysis depends on charge relay system residues Lys64 and Ser141. The Acyl-ester intermediate role is filled by Ser165.

This sequence belongs to the amidase family. GatA subfamily. As to quaternary structure, subunit of the heterotrimeric GatCAB amidotransferase (AdT) complex, composed of A, B and C subunits.

Its subcellular location is the mitochondrion. It carries out the reaction L-glutamyl-tRNA(Gln) + L-glutamine + ATP + H2O = L-glutaminyl-tRNA(Gln) + L-glutamate + ADP + phosphate + H(+). Functionally, allows the formation of correctly charged Gln-tRNA(Gln) through the transamidation of misacylated Glu-tRNA(Gln) in the mitochondria. The reaction takes place in the presence of glutamine and ATP through an activated gamma-phospho-Glu-tRNA(Gln). The sequence is that of Glutamyl-tRNA(Gln) amidotransferase subunit A, mitochondrial from Schizosaccharomyces pombe (strain 972 / ATCC 24843) (Fission yeast).